Reading from the N-terminus, the 496-residue chain is Transmembrane transporter swnT (496 aa).

5 helical membrane-spanning segments follow: residues 40-60 (LSAI…PLIL), 72-92 (VFWG…TLAE), 124-144 (AMIS…SVPL), 162-182 (WMGF…ACFE), and 191-211 (AFLL…FAMA). Residue N225 is glycosylated (N-linked (GlcNAc...) asparagine). 6 helical membrane-spanning segments follow: residues 270-290 (LLWT…AVLV), 314-334 (AAAI…VWSI), 368-388 (PIWS…LYLA), 396-416 (LIAT…VLVL), 434-454 (GLVA…FYCF), and 467-487 (YVSG…ILYA).

This sequence belongs to the amino acid-polyamine-organocation (APC) superfamily. Amino acid/choline transporter (ACT) (TC 2.A.3.4) family.

The protein resides in the membrane. Transmembrane transporter; part of the gene cluster that mediates the biosynthesis of swainsonine, a cytotoxic fungal alkaloid and a potential cancer therapy drug. Does not mediate the secretion of SW and the exact role of swnT in SW biosynthesis remains to be determined. This is Transmembrane transporter swnT from Metarhizium robertsii (strain ARSEF 23 / ATCC MYA-3075) (Metarhizium anisopliae (strain ARSEF 23)).